The sequence spans 351 residues: Short-chain dehydrogenase sdnK (351 aa).

NADP(+)-binding residues include I46, T66, E98, Y224, K228, and T268. Catalysis depends on Y224, which acts as the Proton donor. Residue K228 is the Lowers pKa of active site Tyr of the active site.

It belongs to the short-chain dehydrogenases/reductases (SDR) family.

It participates in antibiotic biosynthesis. Short-chain dehydrogenase; part of the gene cluster that mediates the biosynthesis of sordarin and hypoxysordarin, glycoside antibiotics with a unique tetracyclic diterpene aglycone structure. First, the geranylgeranyl diphosphate synthase sdnC constructs GGDP from farnesyl diphosphate and isopentenyl diphosphate. The diterpene cyclase sdnA then catalyzes the cyclization of GGDP to afford cycloaraneosene. Cycloaraneosene is then hydroxylated four times by the putative cytochrome P450 monooxygenases sdnB, sdnE, sdnF and sdnH to give a hydroxylated cycloaraneosene derivative such as cycloaraneosene-8,9,13,19-tetraol. Although the order of the hydroxylations is unclear, at least C8, C9 and C13 of the cycloaraneosene skeleton are hydroxylated before the sordaricin formation. Dehydration of the 13-hydroxy group of the hydroxylated cycloaraneosene derivative might be catalyzed by an unassigned hypothetical protein such as sdnG and sdnP to construct the cyclopentadiene moiety. The FAD-dependent oxidoreductase sdnN is proposed to catalyze the oxidation at C9 of the hydroxylated cycloaraneosene derivative and also catalyze the Baeyer-Villiger oxidation to give the lactone intermediate. The presumed lactone intermediate would be hydrolyzed to give an acrolein moiety and a carboxylate moiety. Then, [4+2]cycloaddition would occur between the acrolein moiety and the cyclopentadiene moiety to give sordaricin. SdnN might also be involved in the [4+2]cycloaddition after the hypothesized oxidation to accommodate the oxidized product and prompt the [4+2]cycloaddition. GDP-6-deoxy-D-altrose may be biosynthesized from GDP-D-mannose by the putative GDP-mannose-4,6-dehydratase sdnI and the short-chain dehydrogenase sdnK. The glycosyltransferase sdnJ catalyzes the attachment of 6-deoxy-D-altrose onto the 19-hydroxy group of sordaricin to give 4'-O-demethylsordarin. The methyltransferase sdnD would complete the biosynthesis of sordarin. Sordarin can be further modified into hypoxysordarin. The unique acyl chain at the 3'-hydroxy group of hypoxysordarin would be constructed by an iterative type I PKS sdnO and the trans-acting polyketide methyltransferase sdnL. SdnL would be responsible for the introduction of an alpha-methyl group of the polyketide chain. Alternatively, the beta-lactamase-like protein sdnR might be responsible for the cleavage and transfer of the polyketide chain from the PKS sdnO to sordarin. Two putative cytochrome P450 monooxygenases, sdnQ and sdnT, might catalyze the epoxidations of the polyketide chain to complete the biosynthesis of hypoxysordarin. Transcriptional regulators sdnM and sdnS are presumably encoded for the transcriptional regulation of the expression of the sdn gene cluster. This is Short-chain dehydrogenase sdnK from Sordaria araneosa (Pleurage araneosa).